Consider the following 696-residue polypeptide: Gametogenetin-binding protein 2 (696 aa).

A Phosphoserine modification is found at Ser360.

Interacts with GGN.

Its subcellular location is the cytoplasmic vesicle. In terms of biological role, may be involved in spermatogenesis. The chain is Gametogenetin-binding protein 2 (Ggnbp2) from Rattus norvegicus (Rat).